Consider the following 112-residue polypeptide: MLSRFSSQLRFISAVRPVIPKFQPLRFYSVARPDAEKRILKVVSSFDKIQDPKKVTPTSTFANDLGLDSLDAVEVVMAIEEEFSIQIPDKDADEITSVGDAISYITKNPEAK.

The N-terminal 28 residues, 1 to 28 (MLSRFSSQLRFISAVRPVIPKFQPLRFY), are a transit peptide targeting the mitochondrion. Positions 33 to 109 (PDAEKRILKV…DAISYITKNP (77 aa)) constitute a Carrier domain. At S69 the chain carries O-(pantetheine 4'-phosphoryl)serine.

This sequence belongs to the acyl carrier protein (ACP) family. 4'-phosphopantetheine is transferred from CoA to a specific serine of apo-ACP by acpS. This modification is essential for activity because fatty acids are bound in thioester linkage to the sulfhydryl of the prosthetic group.

It is found in the mitochondrion. The protein operates within lipid metabolism; fatty acid biosynthesis. In terms of biological role, carrier of the growing fatty acid chain in fatty acid biosynthesis. May be involved in the synthesis of very-long-chain fatty acids. The chain is Putative acyl carrier protein, mitochondrial from Schizosaccharomyces pombe (strain 972 / ATCC 24843) (Fission yeast).